Here is a 490-residue protein sequence, read N- to C-terminus: GTPase Der (490 aa).

EngA-type G domains are found at residues 3-166 (PVVA…MDDV) and 203-376 (IKLA…DSST). Residues 9 to 16 (GRPNVGKS), 56 to 60 (DTGGI), 118 to 121 (NKTD), 209 to 216 (GRPNVGKS), 256 to 260 (DTAGV), and 321 to 324 (NKWD) contribute to the GTP site. A KH-like domain is found at 377-461 (RRVSTAMLTR…PIRIQFKEGE (85 aa)).

This sequence belongs to the TRAFAC class TrmE-Era-EngA-EngB-Septin-like GTPase superfamily. EngA (Der) GTPase family. Associates with the 50S ribosomal subunit.

Functionally, GTPase that plays an essential role in the late steps of ribosome biogenesis. This chain is GTPase Der, found in Citrobacter koseri (strain ATCC BAA-895 / CDC 4225-83 / SGSC4696).